We begin with the raw amino-acid sequence, 540 residues long: T-complex protein 1 subunit delta (540 aa).

Positions 1 to 12 (MPPAVPAAAATA) are enriched in low complexity. Positions 1–32 (MPPAVPAAAATARQSASGRERNFKDKDKPESV) are disordered. Residues 18 to 31 (GRERNFKDKDKPES) show a composition bias toward basic and acidic residues.

The protein belongs to the TCP-1 chaperonin family. As to quaternary structure, heterooligomeric complex of about 850 to 900 kDa that forms two stacked rings, 12 to 16 nm in diameter.

The protein localises to the cytoplasm. Its function is as follows. Molecular chaperone; assists the folding of proteins upon ATP hydrolysis. Known to play a role, in vitro, in the folding of actin and tubulin. The sequence is that of T-complex protein 1 subunit delta (cct-4) from Caenorhabditis elegans.